The primary structure comprises 1644 residues: Terminal uridylyltransferase 4 (1644 aa).

2 disordered regions span residues 30–60 (SNQTLKPRNDKSEIGTSSLNRNSSKKTKQND) and 75–277 (AASV…EMDY). Phosphoserine is present on serine 102. The span at 108-123 (KGSSQTKLEKTPSLQT) shows a compositional bias: polar residues. At serine 131 the chain carries Phosphoserine. Polar residues-rich tracts occupy residues 146–156 (AEATTEKALNS) and 163–174 (TPTSQMKLQKTP). The residue at position 176 (serine 176) is a Phosphoserine. Composition is skewed to polar residues over residues 194-209 (QTESQQTGKKLTSSFV) and 226-242 (LENSSLSQKQQTQTDNI). Over residues 258–272 (DLSKMKSEESNKENS) the composition is skewed to basic and acidic residues. The interval 273–353 (SEMDYLENAT…KEKRHKKNIL (81 aa)) is required for interaction with LIN28A and pre-let-7 RNA. Residues cysteine 326, cysteine 329, histidine 342, and histidine 348 each contribute to the Zn(2+) site. The span at 603–623 (IADENKAKADEPKDDTKKTET) shows a compositional bias: basic and acidic residues. Residues 603 to 640 (IADENKAKADEPKDDTKKTETDNQSNAAKAKHGKSPLT) are disordered. Residues 649 to 698 (LGQLWLELLKFYTLDFALEEYVICVRIQDILTRENKNWPKRRIAIEDPFS) form the PAP-associated 1 domain. 2 disordered regions span residues 733 to 759 (KGGNKSTMDPKKKEKGKLSSKKPVKSD) and 812 to 841 (HGQDSSSLSTASGGSDLKQKSAEKQGDLTP). The segment covering 745–755 (KEKGKLSSKKP) has biased composition (basic residues). Over residues 815–827 (DSSSLSTASGGSD) the composition is skewed to low complexity. The segment covering 828 to 837 (LKQKSAEKQG) has biased composition (basic and acidic residues). The segment at 918 to 1634 (DKFILTSGKP…CATRRCRERC (717 aa)) is sufficient for monouridylation activity. The segment at 930–947 (IVCSICKKDGHSKNDCPE) adopts a CCHC-type 1 zinc-finger fold. Residues 1015 to 1018 (SSKN), 1025 to 1028 (SDLD), asparagine 1098, lysine 1120, 1138 to 1142 (SYAYI), and histidine 1254 each bind UTP. Mg(2+) is bound by residues aspartate 1026 and aspartate 1028. One can recognise a PAP-associated 2 domain in the interval 1201-1254 (SLGELWLGLLRFYTEEFDFKEYVISIRQKKLLTTFEKQWTSKCIAIEDPFDLNH). The segment at 1310–1327 (RCCRVCGKIGHYMKDCPK) adopts a CCHC-type 2 zinc-finger fold. Residues 1329-1350 (KRLKKKDSEEEKEGNEEEKDSR) form a disordered region. Residues 1358–1375 (LRCFICGDAGHVRRECPE) form a CCHC-type 3 zinc finger. Residues 1402–1427 (AGSAQQQSDQSIRTRQSSECSDSPSY) are compositionally biased toward low complexity. The tract at residues 1402-1483 (AGSAQQQSDQ…LYNFPQSPPA (82 aa)) is disordered. Over residues 1428–1450 (SPQPQPFPQNSPQPSALPPPPSQ) the composition is skewed to pro residues. Low complexity predominate over residues 1451–1473 (PGSQPKLGPPQQGGQPPHQVQMP). Arginine 1624 bears the Omega-N-methylarginine mark.

Belongs to the DNA polymerase type-B-like family. In terms of assembly, interacts with LIN28A in the presence of pre-let-7 RNA. Interacts with T2BP. Interacts with MOV10; the interaction is RNA-dependent. Requires Mg(2+) as cofactor. Mn(2+) serves as cofactor. In terms of tissue distribution, ubiquitously expressed.

The protein localises to the nucleus. The protein resides in the cytoplasm. Its subcellular location is the cytoplasmic ribonucleoprotein granule. The enzyme catalyses RNA(n) + UTP = RNA(n)-3'-uridine ribonucleotide + diphosphate. In terms of biological role, uridylyltransferase that mediates the terminal uridylation of mRNAs with short (less than 25 nucleotides) poly(A) tails, hence facilitating global mRNA decay. Essential for both oocyte maturation and fertility. Through 3' terminal uridylation of mRNA, sculpts, with TUT7, the maternal transcriptome by eliminating transcripts during oocyte growth. Involved in microRNA (miRNA)-induced gene silencing through uridylation of deadenylated miRNA targets. Also functions as an integral regulator of microRNA biogenesiS using 3 different uridylation mechanisms. Acts as a suppressor of miRNA biogenesis by mediating the terminal uridylation of some miRNA precursors, including that of let-7 (pre-let-7), miR107, miR-143 and miR-200c. Uridylated miRNAs are not processed by Dicer and undergo degradation. Degradation of pre-let-7 contributes to the maintenance of embryonic stem (ES) cell pluripotency. Also catalyzes the 3' uridylation of miR-26A, a miRNA that targets IL6 transcript. This abrogates the silencing of IL6 transcript, hence promoting cytokine expression. In the absence of LIN28A, TUT7 and TUT4 monouridylate group II pre-miRNAs, which includes most of pre-let7 members, that shapes an optimal 3' end overhang for efficient processing. Add oligo-U tails to truncated pre-miRNAS with a 5' overhang which may promote rapid degradation of non-functional pre-miRNA species. May also suppress Toll-like receptor-induced NF-kappa-B activation via binding to T2BP. Does not play a role in replication-dependent histone mRNA degradation. Due to functional redundancy between TUT4 and TUT7, the identification of the specific role of each of these proteins is difficult. TUT4 and TUT7 restrict retrotransposition of long interspersed element-1 (LINE-1) in cooperation with MOV10 counteracting the RNA chaperonne activity of L1RE1. TUT7 uridylates LINE-1 mRNAs in the cytoplasm which inhibits initiation of reverse transcription once in the nucleus, whereas uridylation by TUT4 destabilizes mRNAs in cytoplasmic ribonucleoprotein granules. The chain is Terminal uridylyltransferase 4 from Mus musculus (Mouse).